The sequence spans 417 residues: Riboflavin biosynthesis protein RibBA (417 aa).

Residues 1–204 are DHBP synthase; it reads MTRLDSIERA…IADLIEWRRK (204 aa). D-ribulose 5-phosphate is bound by residues 28-29, aspartate 33, 141-145, and glutamate 165; these read RE and RPGHT. Glutamate 29 contributes to the Mg(2+) binding site. Histidine 144 serves as a coordination point for Mg(2+). The tract at residues 205–417 is GTP cyclohydrolase II; that stretch reads HEKHVQRIAE…LDDHPEADGA (213 aa). Residue 259 to 263 coordinates GTP; the sequence is RVHSE. Residues cysteine 264, cysteine 275, and cysteine 277 each coordinate Zn(2+). GTP contacts are provided by residues glutamine 280, 303–305, and threonine 325; that span reads EGR. The active-site Proton acceptor; for GTP cyclohydrolase activity is the aspartate 337. The active-site Nucleophile; for GTP cyclohydrolase activity is arginine 339. GTP-binding residues include threonine 360 and lysine 365.

This sequence in the N-terminal section; belongs to the DHBP synthase family. In the C-terminal section; belongs to the GTP cyclohydrolase II family. Mg(2+) serves as cofactor. Mn(2+) is required as a cofactor. Requires Zn(2+) as cofactor.

The enzyme catalyses D-ribulose 5-phosphate = (2S)-2-hydroxy-3-oxobutyl phosphate + formate + H(+). It carries out the reaction GTP + 4 H2O = 2,5-diamino-6-hydroxy-4-(5-phosphoribosylamino)-pyrimidine + formate + 2 phosphate + 3 H(+). It functions in the pathway cofactor biosynthesis; riboflavin biosynthesis; 2-hydroxy-3-oxobutyl phosphate from D-ribulose 5-phosphate: step 1/1. It participates in cofactor biosynthesis; riboflavin biosynthesis; 5-amino-6-(D-ribitylamino)uracil from GTP: step 1/4. Catalyzes the conversion of D-ribulose 5-phosphate to formate and 3,4-dihydroxy-2-butanone 4-phosphate. Its function is as follows. Catalyzes the conversion of GTP to 2,5-diamino-6-ribosylamino-4(3H)-pyrimidinone 5'-phosphate (DARP), formate and pyrophosphate. The protein is Riboflavin biosynthesis protein RibBA of Mycobacteroides abscessus (strain ATCC 19977 / DSM 44196 / CCUG 20993 / CIP 104536 / JCM 13569 / NCTC 13031 / TMC 1543 / L948) (Mycobacterium abscessus).